The chain runs to 311 residues: Aspartate carbamoyltransferase catalytic subunit (311 aa).

Carbamoyl phosphate-binding residues include R55 and T56. Position 85 (K85) interacts with L-aspartate. Residues R106, H135, and Q138 each contribute to the carbamoyl phosphate site. L-aspartate-binding residues include R168 and R230. Carbamoyl phosphate contacts are provided by L268 and P269.

The protein belongs to the aspartate/ornithine carbamoyltransferase superfamily. ATCase family. In terms of assembly, heterododecamer (2C3:3R2) of six catalytic PyrB chains organized as two trimers (C3), and six regulatory PyrI chains organized as three dimers (R2).

It carries out the reaction carbamoyl phosphate + L-aspartate = N-carbamoyl-L-aspartate + phosphate + H(+). Its pathway is pyrimidine metabolism; UMP biosynthesis via de novo pathway; (S)-dihydroorotate from bicarbonate: step 2/3. In terms of biological role, catalyzes the condensation of carbamoyl phosphate and aspartate to form carbamoyl aspartate and inorganic phosphate, the committed step in the de novo pyrimidine nucleotide biosynthesis pathway. This Salmonella paratyphi A (strain AKU_12601) protein is Aspartate carbamoyltransferase catalytic subunit.